An 88-amino-acid polypeptide reads, in one-letter code: Large ribosomal subunit protein bL27 (88 aa).

Positions 1–13 are enriched in polar residues; it reads MATKKGASSSSNG. Residues 1–25 form a disordered region; it reads MATKKGASSSSNGRDSEAKRLGVKR.

Belongs to the bacterial ribosomal protein bL27 family.

The protein is Large ribosomal subunit protein bL27 of Corynebacterium efficiens (strain DSM 44549 / YS-314 / AJ 12310 / JCM 11189 / NBRC 100395).